A 233-amino-acid polypeptide reads, in one-letter code: Orotidine 5'-phosphate decarboxylase (233 aa).

Residues D9, K31, 58-67 (DLKLHDIPNT), T120, R182, Q191, G211, and R212 contribute to the substrate site. K60 functions as the Proton donor in the catalytic mechanism.

Belongs to the OMP decarboxylase family. Type 1 subfamily. As to quaternary structure, homodimer.

The catalysed reaction is orotidine 5'-phosphate + H(+) = UMP + CO2. The protein operates within pyrimidine metabolism; UMP biosynthesis via de novo pathway; UMP from orotate: step 2/2. In terms of biological role, catalyzes the decarboxylation of orotidine 5'-monophosphate (OMP) to uridine 5'-monophosphate (UMP). In Listeria monocytogenes serotype 4b (strain CLIP80459), this protein is Orotidine 5'-phosphate decarboxylase.